The following is a 171-amino-acid chain: T-cell surface glycoprotein CD3 delta chain (171 aa).

A signal peptide spans 1–21 (MEHSRFLSGLILAAFLSRVSP). Over 22–104 (YEVEMEELED…NCVELDSATL (83 aa)) the chain is Extracellular. An intrachain disulfide couples Cys-37 to Cys-72. Residue Asn-38 is glycosylated (N-linked (GlcNAc...) asparagine). The chain crosses the membrane as a helical span at residues 105-125 (AGIIVTDIIATLLLALGVYCF). At 126–171 (AGHEMGRFSRAADTQDLLRNDQLYQPLRDRNDGQYSRLGENWARNK) the chain is on the cytoplasmic side. An ITAM domain is found at 138–166 (DTQDLLRNDQLYQPLRDRNDGQYSRLGEN). Phosphotyrosine occurs at positions 149 and 160.

As to quaternary structure, the TCR-CD3 complex is composed of a CD3D/CD3E and a CD3G/CD3E heterodimers that preferentially associate with TCRalpha and TCRbeta, respectively, to form TCRalpha/CD3E/CD3G and TCRbeta/CD3G/CD3E trimers. In turn, the hexamer interacts with CD3Z homodimer to form the TCR-CD3 complex. Alternatively, TCRalpha and TCRbeta can be replaced by TCRgamma and TCRdelta. Interacts with coreceptors CD4 and CD8. Post-translationally, phosphorylated on Tyr residues after T-cell receptor triggering by LCK in association with CD4/CD8. In terms of tissue distribution, CD3D is mostly present on T-lymphocytes with its TCR-CD3 partners. Present also in fetal NK-cells.

It is found in the cell membrane. Its function is as follows. Part of the TCR-CD3 complex present on T-lymphocyte cell surface that plays an essential role in adaptive immune response. When antigen presenting cells (APCs) activate T-cell receptor (TCR), TCR-mediated signals are transmitted across the cell membrane by the CD3 chains CD3D, CD3E, CD3G and CD3Z. All CD3 chains contain immunoreceptor tyrosine-based activation motifs (ITAMs) in their cytoplasmic domain. Upon TCR engagement, these motifs become phosphorylated by Src family protein tyrosine kinases LCK and FYN, resulting in the activation of downstream signaling pathways. In addition of this role of signal transduction in T-cell activation, CD3D plays an essential role in thymocyte differentiation. Indeed, participates in correct intracellular TCR-CD3 complex assembly and surface expression. In absence of a functional TCR-CD3 complex, thymocytes are unable to differentiate properly. Interacts with CD4 and CD8 and thus serves to establish a functional link between the TCR and coreceptors CD4 and CD8, which is needed for activation and positive selection of CD4 or CD8 T-cells. In Sus scrofa (Pig), this protein is T-cell surface glycoprotein CD3 delta chain (CD3D).